The sequence spans 667 residues: E3 ubiquitin-protein ligase Midline-1 (667 aa).

The segment at 10-60 (CPICLELFEDPLLLPCAHSLCFNCAHRILVSHCATNESVESITAFQCPTCR) adopts an RING-type zinc-finger fold. Serine 92 and serine 96 each carry phosphoserine. 2 consecutive B box-type zinc fingers follow at residues 116-165 (KVLC…IEPI) and 172-212 (GLMC…VAAL). 12 residues coordinate Zn(2+): cysteine 119, cysteine 122, cysteine 134, cysteine 137, cysteine 142, cysteine 145, histidine 150, histidine 159, cysteine 175, histidine 178, cysteine 198, and histidine 204. Residues 205 to 264 (RDHQVAALSERYDKLKQNLESNLTNLIKRNTELETLLAKLIQTCQHVEVNASRQEAKLTE) adopt a coiled-coil conformation. In terms of domain architecture, COS spans 320–379 (LKENDHARFLQTAKNITERVSMATASSQVLIPEINLNDTFDTFALDFSREKKLLECLDYL). The Fibronectin type-III domain maps to 381-484 (APNPPTIREE…EPGKLKTNSQ (104 aa)). Polar residues predominate over residues 471–485 (SRSSEPGKLKTNSQP). A disordered region spans residues 471–524 (SRSSEPGKLKTNSQPFKLDPKSAHRKLKVSHDNLTVERDESSSKKSHTPERFTS). Residues 482–659 (NSQPFKLDPK…IITGLPIPDH (178 aa)) form the B30.2/SPRY domain. Over residues 499–520 (VSHDNLTVERDESSSKKSHTPE) the composition is skewed to basic and acidic residues. Serine 511 carries the post-translational modification Phosphoserine.

The protein belongs to the TRIM/RBCC family. In terms of assembly, homodimer or heterodimer with MID2. Interacts with IGBP1. Interacts with TRIM16. Post-translationally, phosphorylated on serine and threonine residues. As to expression, in the fetus, highest expression found in kidney, followed by brain and lung. Expressed at low levels in fetal liver. In the adult, most abundant in heart, placenta and brain.

Its subcellular location is the cytoplasm. It is found in the cytoskeleton. It localises to the spindle. The enzyme catalyses S-ubiquitinyl-[E2 ubiquitin-conjugating enzyme]-L-cysteine + [acceptor protein]-L-lysine = [E2 ubiquitin-conjugating enzyme]-L-cysteine + N(6)-ubiquitinyl-[acceptor protein]-L-lysine.. Has E3 ubiquitin ligase activity towards IGBP1, promoting its monoubiquitination, which results in deprotection of the catalytic subunit of protein phosphatase PP2A, and its subsequent degradation by polyubiquitination. This chain is E3 ubiquitin-protein ligase Midline-1 (MID1), found in Homo sapiens (Human).